The primary structure comprises 380 residues: Chorismate synthase (380 aa).

R47 contacts NADP(+). Residues 124-126 (RSS), G288, 303-307 (KPTST), and R329 contribute to the FMN site.

It belongs to the chorismate synthase family. Homotetramer. The cofactor is FMNH2.

It carries out the reaction 5-O-(1-carboxyvinyl)-3-phosphoshikimate = chorismate + phosphate. The protein operates within metabolic intermediate biosynthesis; chorismate biosynthesis; chorismate from D-erythrose 4-phosphate and phosphoenolpyruvate: step 7/7. Its function is as follows. Catalyzes the anti-1,4-elimination of the C-3 phosphate and the C-6 proR hydrogen from 5-enolpyruvylshikimate-3-phosphate (EPSP) to yield chorismate, which is the branch point compound that serves as the starting substrate for the three terminal pathways of aromatic amino acid biosynthesis. This reaction introduces a second double bond into the aromatic ring system. In Leptospira interrogans serogroup Icterohaemorrhagiae serovar copenhageni (strain Fiocruz L1-130), this protein is Chorismate synthase.